The chain runs to 314 residues: Homoserine O-succinyltransferase (314 aa).

Residue cysteine 142 is the Acyl-thioester intermediate of the active site. Residues lysine 163 and serine 192 each contribute to the substrate site. The Proton acceptor role is filled by histidine 235. Residue glutamate 237 is part of the active site. Arginine 249 contacts substrate.

Belongs to the MetA family.

Its subcellular location is the cytoplasm. It carries out the reaction L-homoserine + succinyl-CoA = O-succinyl-L-homoserine + CoA. Its pathway is amino-acid biosynthesis; L-methionine biosynthesis via de novo pathway; O-succinyl-L-homoserine from L-homoserine: step 1/1. Its function is as follows. Transfers a succinyl group from succinyl-CoA to L-homoserine, forming succinyl-L-homoserine. This Photobacterium profundum (strain SS9) protein is Homoserine O-succinyltransferase.